The chain runs to 89 residues: Elongation factor 1-beta (89 aa).

It belongs to the EF-1-beta/EF-1-delta family.

Its function is as follows. Promotes the exchange of GDP for GTP in EF-1-alpha/GDP, thus allowing the regeneration of EF-1-alpha/GTP that could then be used to form the ternary complex EF-1-alpha/GTP/AAtRNA. This chain is Elongation factor 1-beta, found in Methanocella arvoryzae (strain DSM 22066 / NBRC 105507 / MRE50).